The primary structure comprises 403 residues: Homoserine O-succinyltransferase (403 aa).

Positions 58–366 (NAVLICHALS…ESNHGHDAFL (309 aa)) constitute an AB hydrolase-1 domain. The Nucleophile role is filled by serine 164. Arginine 234 contributes to the substrate binding site. Catalysis depends on residues aspartate 329 and histidine 362. Position 363 (aspartate 363) interacts with substrate.

It belongs to the AB hydrolase superfamily. MetX family. As to quaternary structure, homodimer.

It localises to the cytoplasm. It catalyses the reaction L-homoserine + succinyl-CoA = O-succinyl-L-homoserine + CoA. It participates in amino-acid biosynthesis; L-methionine biosynthesis via de novo pathway; O-succinyl-L-homoserine from L-homoserine: step 1/1. Its function is as follows. Transfers a succinyl group from succinyl-CoA to L-homoserine, forming succinyl-L-homoserine. This chain is Homoserine O-succinyltransferase, found in Halothiobacillus neapolitanus (strain ATCC 23641 / c2) (Thiobacillus neapolitanus).